The chain runs to 385 residues: Spermidine/putrescine import ATP-binding protein PotA (385 aa).

An ABC transporter domain is found at 6–238 (IEFKNVSKVF…PINHFVATFI (233 aa)). An ATP-binding site is contributed by 40-47 (GASGSGKS).

The protein belongs to the ABC transporter superfamily. Spermidine/putrescine importer (TC 3.A.1.11.1) family. As to quaternary structure, the complex is composed of two ATP-binding proteins (PotA), two transmembrane proteins (PotB and PotC) and a solute-binding protein (PotD).

It is found in the cell membrane. The catalysed reaction is ATP + H2O + polyamine-[polyamine-binding protein]Side 1 = ADP + phosphate + polyamineSide 2 + [polyamine-binding protein]Side 1.. Functionally, part of the ABC transporter complex PotABCD involved in spermidine/putrescine import. Responsible for energy coupling to the transport system. This chain is Spermidine/putrescine import ATP-binding protein PotA, found in Streptococcus pneumoniae serotype 4 (strain ATCC BAA-334 / TIGR4).